The following is a 162-amino-acid chain: Photosystem II extrinsic protein V (162 aa).

The signal sequence occupies residues 1 to 26 (MFNKNFWTSIIIGCLFCTITYSGVNA). Residues cysteine 62, cysteine 65, histidine 66, and histidine 117 each coordinate heme c.

The protein belongs to the cytochrome c family. PsbV subfamily. In terms of assembly, PSII is composed of 1 copy each of membrane proteins PsbA, PsbB, PsbC, PsbD, PsbE, PsbF, PsbH, PsbI, PsbJ, PsbK, PsbL, PsbM, PsbT, PsbX, PsbY, PsbZ, Psb30/Ycf12, at least 3 peripheral proteins of the oxygen-evolving complex and a large number of cofactors. It forms dimeric complexes. Heme c serves as cofactor.

The protein resides in the plastid. It is found in the cyanelle thylakoid membrane. Its function is as follows. One of the extrinsic, lumenal subunits of photosystem II (PSII). PSII is a light-driven water plastoquinone oxidoreductase, using light energy to abstract electrons from H(2)O, generating a proton gradient subsequently used for ATP formation. The extrinsic proteins stabilize the structure of photosystem II oxygen-evolving complex (OEC), the ion environment of oxygen evolution and protect the OEC against heat-induced inactivation. In Cyanophora paradoxa, this protein is Photosystem II extrinsic protein V.